Consider the following 294-residue polypeptide: RNA polymerase sigma-K factor (294 aa).

A propeptide spanning residues 1–20 (MVTGVFAALGFVVKELVFLV) is cleaved from the precursor. Positions 1–156 (MVTGVFAALG…VNNCFFIFKS (156 aa)) are encoded by spoIVCB. Residues 79-92 (DLISIGTIGLIKGI) carry the Polymerase core binding motif. Positions 114–165 (EIVITKGGCIHPSLIRFNIYGVRIHNGNFFHDKVNNCFFIFKSMPPLFVMNN) are not present in recombined mature factor. The segment at 157–294 (MPPLFVMNNE…KEKRKKAKGK (138 aa)) is encoded by spoIIIC. The H-T-H motif DNA-binding region spans 251-270 (QREIAKELGISRSYVSRIEK).

Belongs to the sigma-70 factor family.

Functionally, sigma factors are initiation factors that promote the attachment of RNA polymerase to specific initiation sites and are then released. This sigma factor is responsible for the expression of sporulation specific genes in the mother cell. This chain is RNA polymerase sigma-K factor (sigK), found in Bacillus subtilis (strain 168).